Reading from the N-terminus, the 1370-residue chain is Putative Polycomb group protein ASXL2 (1370 aa).

Residues 11–86 (RTWAEAAKTV…RMGVYTLKKD (76 aa)) enclose the HTH HARE-type domain. A disordered region spans residues 92-216 (KELSECSEES…DSVPAKPGQM (125 aa)). Over residues 103–120 (DGQSDSHSSDNSSSSDGG) the composition is skewed to low complexity. The segment covering 141–152 (PPSPPSGCPSPT) has biased composition (pro residues). Ser150 carries the post-translational modification Phosphoserine. Residues 178 to 182 (QQKKK) carry the Nuclear localization signal motif. The span at 186 to 198 (CRPSMSISNQHLS) shows a compositional bias: polar residues. The DEUBAD domain maps to 229–338 (PDSILVNTNL…FENYYGQSSG (110 aa)). The LXXLL motif signature appears at 258 to 262 (LLLLL). Disordered stretches follow at residues 340–487 (SLED…AGLQ) and 516–535 (QESLKRKSSLTDEEATSSWE). A compositionally biased stretch (basic and acidic residues) spans 398-412 (QKEENQDEARPDSKS). 4 positions are modified to phosphoserine: Ser477, Ser524, Ser553, and Ser590. An Asymmetric dimethylarginine modification is found at Arg594. Ser601 is subject to Phosphoserine. Residues 643-652 (IPGPGPGGGQ) are compositionally biased toward gly residues. 3 disordered regions span residues 643–734 (IPGP…LASS), 805–891 (PKAG…SSIP), and 1103–1175 (GHAD…VSEQ). Composition is skewed to polar residues over residues 719–734 (AQLQQTSSVPTGLASS) and 830–839 (MTSSPVTTAS). Residues 849–870 (SGTATSTGSAPSSSTLPAASSL) are compositionally biased toward low complexity. Over residues 871 to 891 (KTPGTSANMNGPISRTSSSIP) the composition is skewed to polar residues. The span at 1119–1131 (DESDEDRVGDEQE) shows a compositional bias: acidic residues. Ser1121 and Ser1254 each carry phosphoserine. The segment at 1332-1369 (PSKCYCRLKAMIMCKGCGAFCHDDCIGPSKLCVSCLVV) adopts a PHD-type; atypical zinc-finger fold.

The protein belongs to the Asx family. As to quaternary structure, core component of the polycomb repressive deubiquitinase (PR-DUB) complex, at least composed of BAP1, one of ASXL1, ASXL2 or (probably) ASXL3, and one of MBD5 or MBD6. Distinct combinations of ASXL and MBD proteins may preferentially bind specific histone modification marks. The PR-DUB core associates with a number of accessory proteins, including FOXK1, FOXK2, KDM1B, HCFC1 and OGT; KDM1B specifically associates with ASXL2 PR-DUB complexes. Interacts (via PHD domain) with MBD5 and MBD6 (via MBD domain); the interaction is probably direct and mediates association of MBD proteins with the PR-DUB core. Interacts with PPARA and PPARG.

The protein resides in the nucleus. Putative Polycomb group (PcG) protein. PcG proteins act by forming multiprotein complexes, which are required to maintain the transcriptionally repressive state of homeotic genes throughout development. PcG proteins are not required to initiate repression, but to maintain it during later stages of development. They probably act via methylation of histones, rendering chromatin heritably changed in its expressibility. Involved in transcriptional regulation mediated by ligand-bound nuclear hormone receptors, such as peroxisome proliferator-activated receptor gamma (PPARG). Acts as a coactivator for PPARG and enhances its adipocyte differentiation-inducing activity; the function seems to involve differential recruitment of acetylated and methylated histone H3. Non-catalytic component of the PR-DUB complex, a complex that specifically mediates deubiquitination of histone H2A monoubiquitinated at 'Lys-119' (H2AK119ub1). The PR-DUB complex is an epigenetic regulator of gene expression and acts as a transcriptional coactivator, affecting genes involved in development, cell communication, signaling, cell proliferation and cell viability. ASXL1, ASXL2 and ASXL3 function redundantly in the PR-DUB complex. The ASXL proteins are essential for chromatin recruitment and transcriptional activation of associated genes. ASXL1 and ASXL2 are important for BAP1 protein stability. This Mus musculus (Mouse) protein is Putative Polycomb group protein ASXL2 (Asxl2).